Here is a 28-residue protein sequence, read N- to C-terminus: leu operon leader peptide (28 aa).

Functionally, involved in control of the biosynthesis of leucine. In Salmonella typhi, this protein is leu operon leader peptide (leuL).